The chain runs to 183 residues: Photosystem II extrinsic protein V (183 aa).

Residues 1–31 (MTFGHCRRASTLRSAFVLGLCGLLLAGCSGA) form the signal peptide. The heme c site is built by cysteine 84, cysteine 87, histidine 88, and cysteine 138.

Belongs to the cytochrome c family. PsbV subfamily. In terms of assembly, PSII is composed of 1 copy each of membrane proteins PsbA, PsbB, PsbC, PsbD, PsbE, PsbF, PsbH, PsbI, PsbJ, PsbK, PsbL, PsbM, PsbT, PsbX, Psb30/Ycf12, peripheral proteins PsbO, CyanoQ (PsbQ), PsbU, PsbV and a large number of cofactors. It forms dimeric complexes. It depends on heme c as a cofactor.

It localises to the cell inner membrane. In terms of biological role, probably one of the extrinsic, lumenal subunits of photosystem II (PSII). PSII is a light-driven water plastoquinone oxidoreductase, using light energy to abstract electrons from H(2)O, generating a proton gradient subsequently used for ATP formation. The extrinsic proteins stabilize the structure of photosystem II oxygen-evolving complex (OEC), the ion environment of oxygen evolution and protect the OEC against heat-induced inactivation. Low-potential cytochrome c that plays a role in the OEC of PSII. This chain is Photosystem II extrinsic protein V (psbV1), found in Gloeobacter violaceus (strain ATCC 29082 / PCC 7421).